The sequence spans 446 residues: tRNA-2-methylthio-N(6)-dimethylallyladenosine synthase (446 aa).

The MTTase N-terminal domain maps to 2–122; sequence KKAYVKSYGC…LPDLLRQSRE (121 aa). Residues cysteine 11, cysteine 47, cysteine 85, cysteine 157, cysteine 161, and cysteine 164 each contribute to the [4Fe-4S] cluster site. In terms of domain architecture, Radical SAM core spans 143 to 375; the sequence is RNRGVTGFLT…QQLLDQQRHA (233 aa). One can recognise a TRAM domain in the interval 378–440; that stretch reads AAAVGTVAEI…SNSLFGEVLE (63 aa).

It belongs to the methylthiotransferase family. MiaB subfamily. In terms of assembly, monomer. The cofactor is [4Fe-4S] cluster.

The protein resides in the cytoplasm. It carries out the reaction N(6)-dimethylallyladenosine(37) in tRNA + (sulfur carrier)-SH + AH2 + 2 S-adenosyl-L-methionine = 2-methylsulfanyl-N(6)-dimethylallyladenosine(37) in tRNA + (sulfur carrier)-H + 5'-deoxyadenosine + L-methionine + A + S-adenosyl-L-homocysteine + 2 H(+). Catalyzes the methylthiolation of N6-(dimethylallyl)adenosine (i(6)A), leading to the formation of 2-methylthio-N6-(dimethylallyl)adenosine (ms(2)i(6)A) at position 37 in tRNAs that read codons beginning with uridine. This chain is tRNA-2-methylthio-N(6)-dimethylallyladenosine synthase, found in Methylorubrum populi (strain ATCC BAA-705 / NCIMB 13946 / BJ001) (Methylobacterium populi).